Consider the following 573-residue polypeptide: Urease subunit alpha (573 aa).

Ni(2+) is bound by residues histidine 139, histidine 141, and lysine 222. Residue lysine 222 is modified to N6-carboxylysine. A substrate-binding site is contributed by histidine 224. 2 residues coordinate Ni(2+): histidine 251 and histidine 277. Histidine 325 functions as the Proton donor in the catalytic mechanism. Aspartate 365 provides a ligand contact to Ni(2+).

This sequence belongs to the metallo-dependent hydrolases superfamily. Urease alpha subunit family. In terms of assembly, heterotrimer of UreA (gamma), UreB (beta) and UreC (alpha) subunits. Three heterotrimers associate to form the active enzyme. The cofactor is Ni cation. Post-translationally, carboxylation allows a single lysine to coordinate two nickel ions.

Its subcellular location is the cytoplasm. It carries out the reaction urea + 2 H2O + H(+) = hydrogencarbonate + 2 NH4(+). Its pathway is nitrogen metabolism; urea degradation; CO(2) and NH(3) from urea (urease route): step 1/1. The protein is Urease subunit alpha of Flavobacterium johnsoniae (strain ATCC 17061 / DSM 2064 / JCM 8514 / BCRC 14874 / CCUG 350202 / NBRC 14942 / NCIMB 11054 / UW101) (Cytophaga johnsonae).